Reading from the N-terminus, the 104-residue chain is Large ribosomal subunit protein uL24 (104 aa).

This sequence belongs to the universal ribosomal protein uL24 family. As to quaternary structure, part of the 50S ribosomal subunit.

Its function is as follows. One of two assembly initiator proteins, it binds directly to the 5'-end of the 23S rRNA, where it nucleates assembly of the 50S subunit. In terms of biological role, one of the proteins that surrounds the polypeptide exit tunnel on the outside of the subunit. In Baumannia cicadellinicola subsp. Homalodisca coagulata, this protein is Large ribosomal subunit protein uL24.